The following is a 119-amino-acid chain: Large ribosomal subunit protein bL20 (119 aa).

This sequence belongs to the bacterial ribosomal protein bL20 family.

Binds directly to 23S ribosomal RNA and is necessary for the in vitro assembly process of the 50S ribosomal subunit. It is not involved in the protein synthesizing functions of that subunit. The chain is Large ribosomal subunit protein bL20 from Streptococcus gordonii (strain Challis / ATCC 35105 / BCRC 15272 / CH1 / DL1 / V288).